A 790-amino-acid chain; its full sequence is Exocyst complex component SEC15A (790 aa).

The stretch at 49–70 (LVHQLKNVARKKEAEIEDLCKT) forms a coiled coil.

Belongs to the SEC15 family. As to quaternary structure, the exocyst complex is composed of SEC3, SEC5, SEC6, SEC8, SEC10, EXO70A1 and EXO84B.

Its subcellular location is the cytoplasm. It localises to the cytosol. Its function is as follows. Component of the exocyst complex involved in the docking of exocytic vesicles with fusion sites on the plasma membrane during regulated or polarized secretion. Involved in polarized cell growth and organ morphogenesis. During cytokinesis, involved in cell plate initiation, cell plate maturation and formation of new primary cell wall. This Arabidopsis thaliana (Mouse-ear cress) protein is Exocyst complex component SEC15A (SEC15A).